We begin with the raw amino-acid sequence, 353 residues long: Protein Wnt-11b-1 (353 aa).

A signal peptide spans 1 to 22; sequence MAQIHHCVTLLLILCCSGLCGA. Residues N31, N38, and N88 are each glycosylated (N-linked (GlcNAc...) asparagine). Disulfide bonds link C78–C89, C128–C136, C138–C155, C208–C222, and C210–C217. S214 is lipidated: O-palmitoleoyl serine; by PORCN. 2 positions are modified to sulfotyrosine: Y274 and Y281. 6 disulfides stabilise this stretch: C282/C313, C298/C308, C312/C352, C328/C343, C330/C340, and C335/C336. N-linked (GlcNAc...) asparagine glycosylation occurs at N299.

The protein belongs to the Wnt family. Homodimer. Secreted homodimers form a complex with wnt5a homodimers; tyrosine sulfation of both wnt11 and wnt5a by tpst1 is required for this interaction. Interacts with the transmembrane receptor fzd7/fz7. Interacts with lrp6 and ryk. Interacts with tdgf1/frl1. Interacts weakly with frzb1 and strongly with frzb2/crescent. Interaction with frzb2/crescent antagonizes wnt11 function in the neuroectoderm, but enhances it in mesodermal tissue. Post-translationally, glycosylation is required for protein secretion. Palmitoleoylation is required for efficient binding to frizzled receptors. Depalmitoleoylation leads to Wnt signaling pathway inhibition.

Its subcellular location is the secreted. It localises to the extracellular space. It is found in the extracellular matrix. Ligand for the frizzled7 transmembrane receptor. Primarily acts via non-canonical Wnt pathways mediated by either Ca(2+) and PKC, or by JNK and dvl2/dsh. Depending on the cellular context, can also signal via the canonical Wnt pathway mediated by beta-catenin and dvl2/dsh. May also inhibit canonical Wnt signaling. Maternally initiates dorsal/ventral axis formation by a canonical route, which signals via lrp6. In a complex with wnt5a, activates the canonical and non-canonical processes involved in axis formation. In the non-canonical pathway, acts through fzd7/fz7 to induce phosphorylation of dvl2/dsh. Signals through a non-canonical Wnt pathway to regulate convergent extension movements during gastrulation. Interactions with the secreted Wnt antagonist sfrp5 to coordinate foregut development, acting via a non-canonical wnt pathway whereby sfrp5 restricts wnt11b activity to prevent inappropriate foregut formation. Mediates cardiogenesis via non-canonical Wnt signaling involving JNK-activation and PKC. Acts redundantly with wnt11/wnt11r during pronephros induction. This chain is Protein Wnt-11b-1, found in Xenopus tropicalis (Western clawed frog).